A 506-amino-acid polypeptide reads, in one-letter code: Pleckstrin homology domain-containing family D member 1 (506 aa).

The PH domain maps to 28–136 (KVQLYGVLWK…WLEMLQESGK (109 aa)). The stretch at 146–391 (EAMIKSLEAQ…KVRNKEKEER (246 aa)) forms a coiled coil. The residue at position 503 (Arg503) is an Omega-N-methylarginine.

The protein belongs to the PLEKHD1 family.

This Homo sapiens (Human) protein is Pleckstrin homology domain-containing family D member 1 (PLEKHD1).